Reading from the N-terminus, the 120-residue chain is Large ribosomal subunit protein bL19c (120 aa).

It belongs to the bacterial ribosomal protein bL19 family.

Its subcellular location is the plastid. It is found in the chloroplast. This Thalassiosira pseudonana (Marine diatom) protein is Large ribosomal subunit protein bL19c.